A 727-amino-acid polypeptide reads, in one-letter code: Glucans biosynthesis glucosyltransferase H (727 aa).

The segment at 18–43 (SAMPNERPGAMEPQSLSQMPEGFPRR) is disordered. Transmembrane regions (helical) follow at residues 58-78 (FFVVGGALALSAFAIYEMGAV), 94-114 (LFAINFCWIALAFCSGIAGFF), 278-298 (LQQFAARIYGPVIGTGLGWWV), 408-428 (IMAYLSSPFWLLLILTGLMLA), 460-480 (LFYITMGVLFGPKIFGVLLLL), 496-516 (ILSVIFEVILSALIAPIMMFI), and 572-592 (LLAWMSPALIGLWLAVPISAW).

This sequence belongs to the glycosyltransferase 2 family. OpgH subfamily.

It localises to the cell inner membrane. It participates in glycan metabolism; osmoregulated periplasmic glucan (OPG) biosynthesis. Involved in the biosynthesis of osmoregulated periplasmic glucans (OPGs). This chain is Glucans biosynthesis glucosyltransferase H, found in Shewanella sp. (strain ANA-3).